Consider the following 57-residue polypeptide: Aminopeptidase A (57 aa).

Residues 1–57 (YLTDHYFKVDLNSTVTQQRFLLDPSELAGITIMQPSDSNIEWLKQYRDDVATWLENS) are Extracellular-facing. A glycan (N-linked (GlcNAc...) asparagine) is linked at Asn12.

This sequence belongs to the peptidase M1 family. Homodimer; disulfide-linked. Zn(2+) is required as a cofactor.

It is found in the cell membrane. It carries out the reaction Release of N-terminal glutamate (and to a lesser extent aspartate) from a peptide.. Inhibited by the aminopeptidase competitive inhibitors amastatin (Leu and acidic inhibitor), and bestatin (Leu inhibitor), by chelating agents EDTA, and 1,10-Phenanthroline, as well as by Zn(2+) ions. Substrate specificity is modulated by Ca(2+), Ba(2+), and Mn(2+) ions which enhances the enzymatic activity for cleavage of acidic residues. In terms of biological role, venom protein that cleaves N-terminal acidic residues from peptides with high potency in presence of calcium. It may have several roles in venom including alteration of blood pressure by cleaving circulating angiotensin-2, general degradation of host tissue, increase of permeability to other venom components, and/or processing of other toxins in the venom. In Gloydius blomhoffii (Mamushi), this protein is Aminopeptidase A.